Reading from the N-terminus, the 159-residue chain is Endoribonuclease YbeY (159 aa).

The Zn(2+) site is built by histidine 125, histidine 129, and histidine 135.

This sequence belongs to the endoribonuclease YbeY family. It depends on Zn(2+) as a cofactor.

The protein resides in the cytoplasm. Its function is as follows. Single strand-specific metallo-endoribonuclease involved in late-stage 70S ribosome quality control and in maturation of the 3' terminus of the 16S rRNA. In Thermoanaerobacter pseudethanolicus (strain ATCC 33223 / 39E) (Clostridium thermohydrosulfuricum), this protein is Endoribonuclease YbeY.